A 256-amino-acid chain; its full sequence is Small ribosomal subunit protein uS2 (256 aa).

Belongs to the universal ribosomal protein uS2 family.

In Brucella abortus (strain S19), this protein is Small ribosomal subunit protein uS2.